Consider the following 496-residue polypeptide: MELVVKSVSPETLKTATLVVTINESRVLIGAAQLVDIKSGGAISAVLERGDLAGKSGQTLLLTNLQNIKAERVLLVGIGKDGELSDRQLKKIAGSVLSSLKGLGGSDAVIALDDLSVKNRDTYGKARLFVEALADGEYVFDRFKTQKAEVRPLKKITLLTDKVSVADVERAANHAQAIATGMALTRDLGNLPPNICHPTYLGEEAKALGKAHKNLKVEIHDEKKLAELGMGSFLAVAQGSAQPPRLIVMNYQGGKKGDKPFVLVGKGITFDTGGISIKPAAGMDEMKFDMCGAASVFGTLRAVLELKLPINVVCILACAENMPSGTATRPGDIVTTMSGQTVEILNTDAEGRLVLCDALTYAERFKPQAVIDIATLTGACVVALGGHTSGLLGNNDALINQLLDAGKLADDRAWQLPLFDEYQEQLDSPFADIANIGGPKGGTITAACFLSRFTKAYEWAHLDIAGTAWLSGGKDKGATGRPVPLLTQYLLDRAGV.

Mn(2+) is bound by residues Lys-266 and Asp-271. Residue Lys-278 is part of the active site. Residues Asp-289, Asp-348, and Glu-350 each coordinate Mn(2+). Arg-352 is an active-site residue.

This sequence belongs to the peptidase M17 family. It depends on Mn(2+) as a cofactor.

The protein resides in the cytoplasm. It catalyses the reaction Release of an N-terminal amino acid, Xaa-|-Yaa-, in which Xaa is preferably Leu, but may be other amino acids including Pro although not Arg or Lys, and Yaa may be Pro. Amino acid amides and methyl esters are also readily hydrolyzed, but rates on arylamides are exceedingly low.. It carries out the reaction Release of an N-terminal amino acid, preferentially leucine, but not glutamic or aspartic acids.. Functionally, presumably involved in the processing and regular turnover of intracellular proteins. Catalyzes the removal of unsubstituted N-terminal amino acids from various peptides. The protein is Probable cytosol aminopeptidase of Pseudomonas syringae pv. tomato (strain ATCC BAA-871 / DC3000).